Reading from the N-terminus, the 139-residue chain is Nucleoside diphosphate kinase (139 aa).

The ATP site is built by Lys-10, Phe-58, Arg-86, Thr-92, Arg-104, and Asn-114. His-117 (pros-phosphohistidine intermediate) is an active-site residue.

The protein belongs to the NDK family. Homotetramer. Mg(2+) is required as a cofactor.

It localises to the cytoplasm. The catalysed reaction is a 2'-deoxyribonucleoside 5'-diphosphate + ATP = a 2'-deoxyribonucleoside 5'-triphosphate + ADP. It carries out the reaction a ribonucleoside 5'-diphosphate + ATP = a ribonucleoside 5'-triphosphate + ADP. Its function is as follows. Major role in the synthesis of nucleoside triphosphates other than ATP. The ATP gamma phosphate is transferred to the NDP beta phosphate via a ping-pong mechanism, using a phosphorylated active-site intermediate. The chain is Nucleoside diphosphate kinase from Mycolicibacterium smegmatis (strain ATCC 700084 / mc(2)155) (Mycobacterium smegmatis).